A 295-amino-acid polypeptide reads, in one-letter code: Ribosomal protein L11 methyltransferase (295 aa).

T139, G166, D188, and N231 together coordinate S-adenosyl-L-methionine.

Belongs to the methyltransferase superfamily. PrmA family.

It is found in the cytoplasm. It catalyses the reaction L-lysyl-[protein] + 3 S-adenosyl-L-methionine = N(6),N(6),N(6)-trimethyl-L-lysyl-[protein] + 3 S-adenosyl-L-homocysteine + 3 H(+). Functionally, methylates ribosomal protein L11. The protein is Ribosomal protein L11 methyltransferase of Cyanothece sp. (strain PCC 7425 / ATCC 29141).